We begin with the raw amino-acid sequence, 219 residues long: Ribose-5-phosphate isomerase A (219 aa).

Substrate contacts are provided by residues 28–31, 81–84, and 94–97; these read TGST, DGAD, and KGGG. The Proton acceptor role is filled by E103. Residue K121 coordinates substrate.

The protein belongs to the ribose 5-phosphate isomerase family. As to quaternary structure, homodimer.

It carries out the reaction aldehydo-D-ribose 5-phosphate = D-ribulose 5-phosphate. Its pathway is carbohydrate degradation; pentose phosphate pathway; D-ribose 5-phosphate from D-ribulose 5-phosphate (non-oxidative stage): step 1/1. Its function is as follows. Catalyzes the reversible conversion of ribose-5-phosphate to ribulose 5-phosphate. This chain is Ribose-5-phosphate isomerase A, found in Photobacterium profundum (strain SS9).